The primary structure comprises 1407 residues: ABC transporter B family member 6 (1407 aa).

Positions 18–65 (LTPVSEVSEPPESPSPYLDPGAEHGGTGTAAQADDEEEMEEPEEMEPP) are disordered. Over residues 50 to 63 (ADDEEEMEEPEEME) the composition is skewed to acidic residues. The next 4 membrane-spanning stretches (helical) occupy residues 84 to 104 (VLMV…IVYL), 139 to 159 (IVYI…CWIL), 212 to 231 (VGNY…IGFV), and 236 to 258 (IALI…NIFL). Positions 86–379 (MVFGSVAAAA…AATNFYSFDQ (294 aa)) constitute an ABC transmembrane type-1 1 domain. Residue Asn-291 is glycosylated (N-linked (GlcNAc...) asparagine). The next 2 membrane-spanning stretches (helical) occupy residues 310–330 (GILI…LAIC) and 351–371 (GEII…NQAA). Positions 412–647 (IEFRNVYFSY…GNLYAELLKC (236 aa)) constitute an ABC transporter 1 domain. Position 447 to 454 (447 to 454 (GRNGSGKS)) interacts with ATP. Asn-449 and Asn-663 each carry an N-linked (GlcNAc...) asparagine glycan. 2 disordered regions span residues 670-696 (AERD…SLQR) and 709-815 (NSEE…DGQH). Asn-727 carries an N-linked (GlcNAc...) asparagine glycan. The span at 733–755 (VGEKEPTIKRQDSFEMRLPELPK) shows a compositional bias: basic and acidic residues. Residues 761-770 (PQRQKSNGSD) are compositionally biased toward polar residues. The N-linked (GlcNAc...) asparagine glycan is linked to Asn-767. In terms of domain architecture, ABC transmembrane type-1 2 spans 835–1123 (AVLGSIGAAI…PFGLAPYILK (289 aa)). 6 helical membrane passes run 840–860 (IGAA…ALVV), 880–900 (LIIA…HFYF), 958–978 (IFIQ…LLGW), 982–1002 (LVAL…KLWL), 1061–1081 (IGFA…LLLW), and 1102–1122 (MVFS…PYIL). Positions 1158–1395 (IELKNIDFCY…NGLYVRLMQP (238 aa)) constitute an ABC transporter 2 domain. Asn-1178 is a glycosylation site (N-linked (GlcNAc...) asparagine). 1193–1200 (GVSGSGKS) is a binding site for ATP. N-linked (GlcNAc...) asparagine glycosylation is found at Asn-1260 and Asn-1346.

The protein belongs to the ABC transporter superfamily. ABCB family. Multidrug resistance exporter (TC 3.A.1.201) subfamily. Expressed in aerial tissues.

The protein resides in the membrane. It carries out the reaction (indol-3-yl)acetate(in) + ATP + H2O = (indol-3-yl)acetate(out) + ADP + phosphate + H(+). Its function is as follows. Probable auxin efflux transporter that contributes, together with ABCB20 and in a FKBP42/TWD1-dependent manner, to the regulation of leaf position and morphology, internode distribution, roots development, and inflorescence organization, probably by modulating auxin repartition. The sequence is that of ABC transporter B family member 6 from Arabidopsis thaliana (Mouse-ear cress).